Here is a 353-residue protein sequence, read N- to C-terminus: Photosystem II D2 protein (353 aa).

Residue T2 is modified to N-acetylthreonine. T2 is subject to Phosphothreonine. A helical membrane pass occupies residues 41-61; the sequence is CAYFALGGWFTGTTFVTSWYT. H118 provides a ligand contact to chlorophyll a. A helical membrane pass occupies residues 125 to 141; it reads GFMLRQFELARSVQLRP. Pheophytin a is bound by residues Q130 and N143. Residues 153 to 166 traverse the membrane as a helical segment; the sequence is VFVSVFLIYPLGQS. H198 serves as a coordination point for chlorophyll a. The helical transmembrane segment at 208-228 threads the bilayer; it reads AALLCAIHGATVENTLFEDGD. 2 residues coordinate a plastoquinone: H215 and F262. H215 provides a ligand contact to Fe cation. Residue H269 participates in Fe cation binding. Residues 279–295 form a helical membrane-spanning segment; that stretch reads GLWMSALGVVGLALNLR.

This sequence belongs to the reaction center PufL/M/PsbA/D family. In terms of assembly, PSII is composed of 1 copy each of membrane proteins PsbA, PsbB, PsbC, PsbD, PsbE, PsbF, PsbH, PsbI, PsbJ, PsbK, PsbL, PsbM, PsbT, PsbX, PsbY, PsbZ, Psb30/Ycf12, at least 3 peripheral proteins of the oxygen-evolving complex and a large number of cofactors. It forms dimeric complexes. The cofactor is The D1/D2 heterodimer binds P680, chlorophylls that are the primary electron donor of PSII, and subsequent electron acceptors. It shares a non-heme iron and each subunit binds pheophytin, quinone, additional chlorophylls, carotenoids and lipids. There is also a Cl(-1) ion associated with D1 and D2, which is required for oxygen evolution. The PSII complex binds additional chlorophylls, carotenoids and specific lipids..

It localises to the plastid. It is found in the chloroplast thylakoid membrane. The enzyme catalyses 2 a plastoquinone + 4 hnu + 2 H2O = 2 a plastoquinol + O2. In terms of biological role, photosystem II (PSII) is a light-driven water:plastoquinone oxidoreductase that uses light energy to abstract electrons from H(2)O, generating O(2) and a proton gradient subsequently used for ATP formation. It consists of a core antenna complex that captures photons, and an electron transfer chain that converts photonic excitation into a charge separation. The D1/D2 (PsbA/PsbD) reaction center heterodimer binds P680, the primary electron donor of PSII as well as several subsequent electron acceptors. D2 is needed for assembly of a stable PSII complex. The chain is Photosystem II D2 protein from Morus indica (Mulberry).